The chain runs to 450 residues: Phosphoglucosamine mutase (450 aa).

The active-site Phosphoserine intermediate is the S102. S102, D243, D245, and D247 together coordinate Mg(2+). A Phosphoserine modification is found at S102.

Belongs to the phosphohexose mutase family. Requires Mg(2+) as cofactor. In terms of processing, activated by phosphorylation.

The catalysed reaction is alpha-D-glucosamine 1-phosphate = D-glucosamine 6-phosphate. In terms of biological role, catalyzes the conversion of glucosamine-6-phosphate to glucosamine-1-phosphate. The polypeptide is Phosphoglucosamine mutase (Rhizobium etli (strain ATCC 51251 / DSM 11541 / JCM 21823 / NBRC 15573 / CFN 42)).